Consider the following 111-residue polypeptide: MVTANFAAIAGLSLIAVALVAVFFSPYRRWLGFMLAGMFFWGLLEVVRFGVQVTFEMPVTYSYLTALSLAMVMVTFVLLREDKQAQKALANRQYIEHTPVYEDDQQQCSSR.

Residues 1 to 5 (MVTAN) lie on the Periplasmic side of the membrane. Residues 6–26 (FAAIAGLSLIAVALVAVFFSP) form a helical membrane-spanning segment. The Cytoplasmic segment spans residues 27 to 30 (YRRW). Residues 31 to 51 (LGFMLAGMFFWGLLEVVRFGV) form a helical membrane-spanning segment. At 52–58 (QVTFEMP) the chain is on the periplasmic side. A helical transmembrane segment spans residues 59–79 (VTYSYLTALSLAMVMVTFVLL). Residues 80 to 111 (REDKQAQKALANRQYIEHTPVYEDDQQQCSSR) are Cytoplasmic-facing.

It localises to the cell inner membrane. In terms of biological role, may play a role in cellular filamentation, especially in response to ciprofloxacin. Increased expression confers tolerance to the antibiotic ciprofloxacin. This chain is Ciprofloxacin tolerance protein, found in Acinetobacter baumannii.